Reading from the N-terminus, the 177-residue chain is Small ribosomal subunit protein mS23 (177 aa).

Position 2 is an N-acetylalanine (Ala2). Lys83 bears the N6-succinyllysine mark. The residue at position 102 (Lys102) is an N6-acetyllysine. The segment at 145-177 (LQASSEGHEPQEDDDLAQRGQVKQEPETAPSPP) is disordered.

The protein belongs to the mitochondrion-specific ribosomal protein mS23 family. As to quaternary structure, component of the mitochondrial ribosome small subunit (28S) which comprises a 12S rRNA and about 30 distinct proteins.

It is found in the mitochondrion. This Mus musculus (Mouse) protein is Small ribosomal subunit protein mS23.